Reading from the N-terminus, the 201-residue chain is UPF0301 protein R00917 (201 aa).

Belongs to the UPF0301 (AlgH) family.

This Rhizobium meliloti (strain 1021) (Ensifer meliloti) protein is UPF0301 protein R00917.